A 368-amino-acid polypeptide reads, in one-letter code: MSILEKVQPIETMLPERYYTMSTEDMEKRVREIKEKMGETLFIPGHHYQKDEVVQFSDAAGDSLQLAQVAASNKKAKYIVFCGVHFMAETADMLTTDDQIVILPDMRAGCSMADMADIEQTERAWKELTKLFGDTMIPLTYVNSTAAIKAFCGRNGGATVTSSNAKQMVSWAFTQKERLVFLPDQHLGRNTTYDLGIPLDKMAVWDPYTDSLEYEGDIEEIQVILWKGHCSVHQNFTVKNIENVRKNQPDMNIIVHPECCYEVVAASDYAGSTKYIIDMIEAAPSGSKWAIGTEMNLVNRIIQQHPDKEIVSLNPFMCPCLTMNRIDLPHLLWALETIEKGEEINVISVDKQVTEEAVLALNRMLERV.

Positions 46 and 63 each coordinate iminosuccinate. Residue C110 participates in [4Fe-4S] cluster binding. Residues 141–143 (YVN) and S162 each bind iminosuccinate. C230 contacts [4Fe-4S] cluster. Residues 256–258 (HPE) and T273 contribute to the iminosuccinate site. A [4Fe-4S] cluster-binding site is contributed by C320.

This sequence belongs to the quinolinate synthase family. Type 3 subfamily. [4Fe-4S] cluster serves as cofactor.

It is found in the cytoplasm. It catalyses the reaction iminosuccinate + dihydroxyacetone phosphate = quinolinate + phosphate + 2 H2O + H(+). The protein operates within cofactor biosynthesis; NAD(+) biosynthesis; quinolinate from iminoaspartate: step 1/1. In terms of biological role, catalyzes the condensation of iminoaspartate with dihydroxyacetone phosphate to form quinolinate. This is Quinolinate synthase from Bacillus cereus (strain ATCC 10987 / NRS 248).